The chain runs to 309 residues: Glutaminase (309 aa).

Substrate-binding residues include Ser65, Asn117, Glu162, Asn169, Tyr193, Tyr245, and Val263.

It belongs to the glutaminase family. In terms of assembly, homotetramer.

The enzyme catalyses L-glutamine + H2O = L-glutamate + NH4(+). This is Glutaminase from Geobacillus thermodenitrificans (strain NG80-2).